The primary structure comprises 101 residues: DNA-binding protein Fis (101 aa).

The H-T-H motif DNA-binding region spans 77-96; that stretch reads QTRAANMLGINRGTLRKKLK.

The protein belongs to the transcriptional regulatory Fis family. Homodimer.

Its function is as follows. Activates ribosomal RNA transcription. Plays a direct role in upstream activation of rRNA promoters. This Shewanella pealeana (strain ATCC 700345 / ANG-SQ1) protein is DNA-binding protein Fis.